A 496-amino-acid chain; its full sequence is Thiamine transporter 2 (496 aa).

Residues 1-7 (MDCYRTS) are Cytoplasmic-facing. Residues 8 to 28 (PSNSWIYTTVILCIFGFFSMM) form a helical membrane-spanning segment. Topologically, residues 29-53 (RPSEPFLIPYLSGPDKNLTSEEMTN) are extracellular. A glycan (N-linked (GlcNAc...) asparagine) is linked at N45. Residues 54-74 (EIFPVWTYSYLVLLLPVLVLT) form a helical membrane-spanning segment. The Cytoplasmic portion of the chain corresponds to 75 to 81 (DYVRYKP). The helical transmembrane segment at 82–102 (VIILQGISFIITWLLLLFGQG) threads the bilayer. Topologically, residues 103 to 110 (VKTMQVVE) are extracellular. A helical transmembrane segment spans residues 111 to 131 (FFYGMVTATEVAYYAYIYSVV). Topologically, residues 132 to 144 (SPEHYQRVSGYCR) are cytoplasmic. A helical transmembrane segment spans residues 145-165 (SVTLVAYTAGSVLAQLLVSLA). N-linked (GlcNAc...) asparagine glycosylation occurs at N166. The Extracellular portion of the chain corresponds to 166–169 (NLSY). Residues 170-190 (FYLNVISLASVSVAFLFSLFL) traverse the membrane as a helical segment. Topologically, residues 191 to 282 (PMPKKSMFFH…YSSKRLFYWS (92 aa)) are cytoplasmic. The interval 210-248 (SSSVNPVLEETHEGEAPDCEKQKPTSEIPSTSGKLHKGQ) is disordered. Positions 218-233 (EETHEGEAPDCEKQKP) are enriched in basic and acidic residues. Residues 234–248 (TSEIPSTSGKLHKGQ) are compositionally biased toward polar residues. Residues 283–303 (LWWAFATAGFNQILNYVQILW) traverse the membrane as a helical segment. The Extracellular segment spans residues 304–316 (DYKSPSQDSSIYN). A helical transmembrane segment spans residues 317 to 337 (GAVEATATFGGAVAAFAVGYV). The Cytoplasmic segment spans residues 338-342 (KVNWD). Residues 343–363 (LLGELALAVFSVVNAGSLFLM) form a helical membrane-spanning segment. Residues 364-375 (HYTANIWACYAG) lie on the Extracellular side of the membrane. A helical membrane pass occupies residues 376 to 396 (YLIFKSSYMLLITIAVFQIAV). Residues 397–405 (NLSVERYAL) are Cytoplasmic-facing. A helical transmembrane segment spans residues 406 to 426 (VFGINTFIALVIQTIITVIVV). Over 427–434 (DQRGLNLP) the chain is Extracellular. Residues 435–455 (ISIQFLVYGSYFAVIAGIFLM) traverse the membrane as a helical segment. Topologically, residues 456–496 (RSMYIIYSTKSQKDVQSPAPSENPDMSHPEEESNAIMSTKL) are cytoplasmic. The interval 469 to 496 (DVQSPAPSENPDMSHPEEESNAIMSTKL) is disordered.

Belongs to the reduced folate carrier (RFC) transporter (TC 2.A.48) family.

The protein localises to the membrane. It catalyses the reaction thiamine(out) + H(+)(in) = thiamine(in) + H(+)(out). It carries out the reaction pyridoxine(out) + n H(+)(out) = pyridoxine(in) + n H(+)(in). Mediates high affinity thiamine uptake, probably via a proton anti-port mechanism. Has no folate transport activity. Mediates H(+)-dependent pyridoxine transport. This Macaca fascicularis (Crab-eating macaque) protein is Thiamine transporter 2 (SLC19A3).